A 1063-amino-acid chain; its full sequence is Valine--tRNA ligase, mitochondrial (1063 aa).

Residues 1-26 constitute a mitochondrion transit peptide; sequence MPHLPLASFRPPFWGLRHSRGLPRFH. The disordered stretch occupies residues 25–53; it reads FHSVSTQSEPHGSPISRRNREAKQKRLRE. Residues 42–53 show a composition bias toward basic and acidic residues; the sequence is RNREAKQKRLRE. Positions 146–156 match the 'HIGH' region motif; sequence PNVTGSLHIGH. Positions 658-662 match the 'KMSKS' region motif; that stretch reads KMSKS. Lys661 lines the ATP pocket.

It belongs to the class-I aminoacyl-tRNA synthetase family.

It localises to the mitochondrion. The enzyme catalyses tRNA(Val) + L-valine + ATP = L-valyl-tRNA(Val) + AMP + diphosphate. Its function is as follows. Catalyzes the attachment of valine to tRNA(Val) in a two-step reaction: valine is first activated by ATP to form Val-AMP and then transferred to the acceptor end of tRNA(Val). This chain is Valine--tRNA ligase, mitochondrial (VARS2), found in Homo sapiens (Human).